The chain runs to 294 residues: 4-hydroxy-tetrahydrodipicolinate synthase (294 aa).

Threonine 47 provides a ligand contact to pyruvate. The active-site Proton donor/acceptor is the tyrosine 135. Lysine 163 (schiff-base intermediate with substrate) is an active-site residue. Threonine 205 is a pyruvate binding site.

This sequence belongs to the DapA family. As to quaternary structure, homotetramer; dimer of dimers.

It is found in the cytoplasm. The enzyme catalyses L-aspartate 4-semialdehyde + pyruvate = (2S,4S)-4-hydroxy-2,3,4,5-tetrahydrodipicolinate + H2O + H(+). Its pathway is amino-acid biosynthesis; L-lysine biosynthesis via DAP pathway; (S)-tetrahydrodipicolinate from L-aspartate: step 3/4. Its function is as follows. Catalyzes the condensation of (S)-aspartate-beta-semialdehyde [(S)-ASA] and pyruvate to 4-hydroxy-tetrahydrodipicolinate (HTPA). The polypeptide is 4-hydroxy-tetrahydrodipicolinate synthase (Rickettsia africae (strain ESF-5)).